The chain runs to 124 residues: Small ribosomal subunit protein uS12 (124 aa).

Asp89 carries the post-translational modification 3-methylthioaspartic acid. The segment at 105-124 is disordered; it reads QGVKNRKQARSKYGAKMEKK.

The protein belongs to the universal ribosomal protein uS12 family. In terms of assembly, part of the 30S ribosomal subunit. Contacts proteins S8 and S17. May interact with IF1 in the 30S initiation complex.

In terms of biological role, with S4 and S5 plays an important role in translational accuracy. Functionally, interacts with and stabilizes bases of the 16S rRNA that are involved in tRNA selection in the A site and with the mRNA backbone. Located at the interface of the 30S and 50S subunits, it traverses the body of the 30S subunit contacting proteins on the other side and probably holding the rRNA structure together. The combined cluster of proteins S8, S12 and S17 appears to hold together the shoulder and platform of the 30S subunit. In Renibacterium salmoninarum (strain ATCC 33209 / DSM 20767 / JCM 11484 / NBRC 15589 / NCIMB 2235), this protein is Small ribosomal subunit protein uS12.